An 886-amino-acid polypeptide reads, in one-letter code: DNA mismatch repair protein MutS (886 aa).

641-648 contacts ATP; sequence GPNMAGKS.

Belongs to the DNA mismatch repair MutS family.

Its function is as follows. This protein is involved in the repair of mismatches in DNA. It is possible that it carries out the mismatch recognition step. This protein has a weak ATPase activity. The sequence is that of DNA mismatch repair protein MutS from Rickettsia akari (strain Hartford).